The primary structure comprises 595 residues: Potassium-transporting ATPase potassium-binding subunit (595 aa).

10 consecutive transmembrane segments (helical) span residues 9–29 (ICGY…YMAA), 63–83 (TGYA…VYAL), 135–155 (GLTV…VALI), 177–197 (ILHI…GQGV), 285–305 (FLEM…FGVM), 312–332 (GWVI…VTVL), 412–432 (GLYG…LMIG), 451–471 (AIVI…AVML), 516–536 (LMLG…VLAI), and 560–580 (FVGL…IPAL).

It belongs to the KdpA family. In terms of assembly, the system is composed of three essential subunits: KdpA, KdpB and KdpC.

The protein resides in the cell inner membrane. Functionally, part of the high-affinity ATP-driven potassium transport (or Kdp) system, which catalyzes the hydrolysis of ATP coupled with the electrogenic transport of potassium into the cytoplasm. This subunit binds the periplasmic potassium ions and delivers the ions to the membrane domain of KdpB through an intramembrane tunnel. The sequence is that of Potassium-transporting ATPase potassium-binding subunit from Methylococcus capsulatus (strain ATCC 33009 / NCIMB 11132 / Bath).